A 360-amino-acid chain; its full sequence is Heme A synthase (360 aa).

A run of 9 helical transmembrane segments spans residues 29 to 49 (WLFAMAALVIAMVAVGGATRL), 111 to 131 (FLGRLIGFAFFLPLGWFWWTG), 139 to 159 (LGLLGLGVLGGLQGAVGWIMV), 175 to 195 (LAAHLTLASAIFAGLVWLAAG), 210 to 230 (LTALALPLLMLVQIALGGLVA), 242 to 262 (PLMDGAFIPPLSGLFAVTPWI), 269 to 289 (VALVQLNHRLAAYGLLAVAAL), 309 to 329 (AILGLVTAQAALGITTLLLAV), and 330 to 350 (PLWAGLAHQVTAMLVLGMAAV). Residue H276 coordinates heme. Heme is bound at residue H337.

It belongs to the COX15/CtaA family. Type 2 subfamily. In terms of assembly, interacts with CtaB. Heme b is required as a cofactor.

It localises to the cell membrane. It carries out the reaction Fe(II)-heme o + 2 A + H2O = Fe(II)-heme a + 2 AH2. The protein operates within porphyrin-containing compound metabolism; heme A biosynthesis; heme A from heme O: step 1/1. In terms of biological role, catalyzes the conversion of heme O to heme A by two successive hydroxylations of the methyl group at C8. The first hydroxylation forms heme I, the second hydroxylation results in an unstable dihydroxymethyl group, which spontaneously dehydrates, resulting in the formyl group of heme A. The protein is Heme A synthase of Methylobacterium nodulans (strain LMG 21967 / CNCM I-2342 / ORS 2060).